Reading from the N-terminus, the 441-residue chain is Arginine biosynthesis bifunctional protein ArgJ, mitochondrial (441 aa).

Substrate-binding residues include Thr178, Lys204, Thr215, Glu304, Asn436, and Ser441. Catalysis depends on Thr215, which acts as the Nucleophile.

Belongs to the ArgJ family. As to quaternary structure, heterodimer of an alpha and a beta chain. In terms of processing, the alpha and beta chains are autoproteolytically processed from a single precursor protein within the mitochondrion.

It localises to the mitochondrion matrix. The catalysed reaction is N(2)-acetyl-L-ornithine + L-glutamate = N-acetyl-L-glutamate + L-ornithine. It carries out the reaction L-glutamate + acetyl-CoA = N-acetyl-L-glutamate + CoA + H(+). It participates in amino-acid biosynthesis; L-arginine biosynthesis; L-ornithine and N-acetyl-L-glutamate from L-glutamate and N(2)-acetyl-L-ornithine (cyclic): step 1/1. It functions in the pathway amino-acid biosynthesis; L-arginine biosynthesis; N(2)-acetyl-L-ornithine from L-glutamate: step 1/4. In terms of biological role, catalyzes two activities which are involved in the cyclic version of arginine biosynthesis: the synthesis of acetylglutamate from glutamate and acetyl-CoA, and of ornithine by transacetylation between acetylornithine and glutamate. This is Arginine biosynthesis bifunctional protein ArgJ, mitochondrial from Lodderomyces elongisporus (strain ATCC 11503 / CBS 2605 / JCM 1781 / NBRC 1676 / NRRL YB-4239) (Yeast).